Reading from the N-terminus, the 245-residue chain is 8-amino-3,8-dideoxy-manno-octulosonate cytidylyltransferase (245 aa).

This sequence belongs to the KdsB family.

The protein resides in the cytoplasm. It catalyses the reaction 8-amino-3,8-dideoxy-alpha-D-manno-octulosonate + CTP = CMP-8-amino-3,8-dideoxy-alpha-D-manno-oct-2-ulosonate + diphosphate. The protein operates within bacterial outer membrane biogenesis; lipopolysaccharide biosynthesis. Its function is as follows. Activates KDO8N (a required 8-carbon sugar) for incorporation into bacterial lipopolysaccharide in the Shewanella genus. This Shewanella sediminis (strain HAW-EB3) protein is 8-amino-3,8-dideoxy-manno-octulosonate cytidylyltransferase.